The sequence spans 79 residues: Hematopoietic cell signal transducer (79 aa).

Positions 1 to 18 (MIHPGHILFLLLLPVAAA) are cleaved as a signal peptide. Residues 19–34 (QTTPGSCSGCGSLSLP) are Extracellular-facing. Residues 35-55 (LLAGLVAADAVASPLIVGAVF) form a helical membrane-spanning segment. At 56–79 (LCARPRRSPAQGDGKVYINMPGRG) the chain is on the cytoplasmic side. Tyr72 is modified (phosphotyrosine). A GRB2 binding site region spans residues 72–74 (YIN). Residues 72–75 (YINM) form a PIK3R1 binding site region.

Belongs to the DAP10 family. Homodimer; Disulfide-linked. Heterohexamer composed of four subunits of HCST/DAP10 and two subunits of KLRK1. Interacts (via transmembrane domain) with KLRK1 (via transmembrane domain); the interaction is required for KLRK1 NK cell surface and induces NK cell-mediated cytotoxicity. Interacts with PIK3R1 and GRB2. Interacts with CLEC5A. Forms an CLEC5A/TYROBP/HCST trimolecular complex depending almost solely on TYROBP. Interacts with CD300H. Phosphorylated; PIK3R1 and GRB2 associate specifically with tyrosine-phosphorylated HCST. In terms of processing, O-glycosylated.

Its subcellular location is the membrane. Its function is as follows. Transmembrane adapter protein which associates with KLRK1 to form an activation receptor KLRK1-HCST in lymphoid and myeloid cells; this receptor plays a major role in triggering cytotoxicity against target cells expressing cell surface ligands such as MHC class I chain-related MICA and MICB, and UL16-binding proteins (ULBPs); these ligands are up-regulated by stress conditions and pathological state such as viral infection and tumor transformation. Functions as a docking site for PI3-kinase PIK3R1 and GRB2. Interaction of ULBPs with KLRK1-HCST triggers calcium mobilization and activation of the PIK3R1, MAP2K/ERK, and JAK2/STAT5 signaling pathways. Both PIK3R1 and GRB2 are required for full KLRK1-HCST-mediated activation and ultimate killing of target cells. In NK cells, KLRK1-HCST signaling directly induces cytotoxicity and enhances cytokine production initiated via DAP12/TYROBP-associated receptors. In T-cells, it provides primarily costimulation for TCR-induced signals. KLRK1-HCST receptor plays a role in immune surveillance against tumors and is required for cytolysis of tumors cells; indeed, melanoma cells that do not express KLRK1 ligands escape from immune surveillance mediated by NK cells. The chain is Hematopoietic cell signal transducer (HCST) from Macaca mulatta (Rhesus macaque).